A 255-amino-acid polypeptide reads, in one-letter code: tRNA pseudouridine synthase A (255 aa).

Residue aspartate 43 is the Nucleophile of the active site. Substrate is bound at residue tyrosine 94.

It belongs to the tRNA pseudouridine synthase TruA family.

The catalysed reaction is uridine(38/39/40) in tRNA = pseudouridine(38/39/40) in tRNA. Its function is as follows. Formation of pseudouridine at positions 38, 39 and 40 in the anticodon stem and loop of transfer RNAs. The chain is tRNA pseudouridine synthase A from Pyrobaculum islandicum (strain DSM 4184 / JCM 9189 / GEO3).